The sequence spans 204 residues: Pyridoxamine 5'-phosphate oxidase YLR456W homolog (204 aa).

FMN-binding positions include 65–66 (FT) and N127.

This sequence belongs to the pyridoxamine 5'-phosphate oxidase family. FMN serves as cofactor.

The protein localises to the cytoplasm. The protein resides in the nucleus. This Saccharomyces cerevisiae (strain ATCC 204508 / S288c) (Baker's yeast) protein is Pyridoxamine 5'-phosphate oxidase YLR456W homolog.